We begin with the raw amino-acid sequence, 332 residues long: uncharacterized protein (332 aa).

Residues 1–23 form the signal peptide; it reads MKRIPSLIIGLLLILATWHSVLA. A helical transmembrane segment spans residues 231–251; sequence SFFLGMIVTLIILAPVILYLW.

The protein localises to the membrane. This is an uncharacterized protein from Pyrococcus horikoshii (strain ATCC 700860 / DSM 12428 / JCM 9974 / NBRC 100139 / OT-3).